Reading from the N-terminus, the 185-residue chain is Ribosome-recycling factor (185 aa).

The protein belongs to the RRF family.

Its subcellular location is the cytoplasm. Responsible for the release of ribosomes from messenger RNA at the termination of protein biosynthesis. May increase the efficiency of translation by recycling ribosomes from one round of translation to another. The polypeptide is Ribosome-recycling factor (Shewanella sp. (strain ANA-3)).